Reading from the N-terminus, the 1915-residue chain is Methylcytosine dioxygenase tet3-B (1915 aa).

Residues 28-49 (RLRVSEMPSELNGGGDGSKGDG) form a disordered region. A CXXC-type zinc finger spans residues 61-102 (SNKKRKRCGVCVPCLRKEPCGTCYNCVNRSTSHQICKMRKCE). Residues Cys-68, Cys-71, Cys-74, Cys-80, Cys-83, Cys-86, Cys-96, and Cys-101 each coordinate Zn(2+). Over residues 629–638 (PNSQQAPVSK) the composition is skewed to polar residues. Disordered regions lie at residues 629–679 (PNSQ…RVKE), 776–806 (GRCP…VPGQ), and 831–880 (FSLP…LSNN). The segment covering 664–676 (KPPRKQVQIKKPR) has biased composition (basic residues). The segment covering 779 to 793 (PTPSTGDSSSGQGDS) has biased composition (low complexity). Composition is skewed to polar residues over residues 838–854 (VPSQ…TSGV) and 864–880 (QLPS…LSNN). Residues Cys-974, Cys-976, Cys-1034, His-1060, and Cys-1062 each coordinate Zn(2+). Arg-1102 contributes to the 2-oxoglutarate binding site. Cys-1112, Cys-1114, Cys-1130, Cys-1139, and Cys-1199 together coordinate Zn(2+). Cys-1215 serves as a coordination point for 2-oxoglutarate. His-1221 lines the Zn(2+) pocket. Positions 1223 and 1225 each coordinate Fe cation. His-1257 contacts 2-oxoglutarate. 3 disordered regions span residues 1298–1356 (LSEP…QTKP), 1469–1516 (GMNQ…APME), and 1719–1753 (PAVN…VKEE). The span at 1308–1339 (RQLDAKKATAEKKKLQKEKLVSPDKTKQEPSD) shows a compositional bias: basic and acidic residues. Polar residues predominate over residues 1340 to 1355 (TKTCQQNPGVPQQQTK). The segment covering 1482-1491 (NYRRSSEVPH) has biased composition (basic and acidic residues). 2 stretches are compositionally biased toward polar residues: residues 1494 to 1503 (SLQNSNSQKS) and 1720 to 1732 (AVNS…SQNH). His-1794 serves as a coordination point for Fe cation. Residue 1809-1811 (RIS) participates in 2-oxoglutarate binding. Residues 1827–1860 (LALWEAKMKQLAERARVKEEEAAKLGIKQEVKSL) are a coiled coil.

It belongs to the TET family. It depends on Fe(2+) as a cofactor. Zn(2+) serves as cofactor. As to expression, detected in embryo (at protein level). Detected in embryonic head, in developing brain and eye.

It localises to the nucleus. Its subcellular location is the chromosome. It catalyses the reaction a 5-methyl-2'-deoxycytidine in DNA + 2-oxoglutarate + O2 = a 5-hydroxymethyl-2'-deoxycytidine in DNA + succinate + CO2. It carries out the reaction a 5-hydroxymethyl-2'-deoxycytidine in DNA + 2-oxoglutarate + O2 = a 5-formyl-2'-deoxycytidine in DNA + succinate + CO2 + H2O. The catalysed reaction is a 5-formyl-2'-deoxycytidine in DNA + 2-oxoglutarate + O2 = a 5-carboxyl-2'-deoxycytidine in DNA + succinate + CO2 + H(+). Dioxygenase that catalyzes the conversion of the modified genomic base 5-methylcytosine (5mC) into 5-hydroxymethylcytosine (5hmC) and plays a key role in epigenetic chromatin reprogramming during embryonic development. Conversion of 5mC into 5hmC probably constitutes the first step in cytosine demethylation. Selectively binds to the promoter region of target genes and contributes to regulate the expression of numerous developmental genes, including pax6, rax, sox9 and six3. May also contribute to the regulation of target genes in ways that do not require its enzyme activity. This is Methylcytosine dioxygenase tet3-B from Xenopus laevis (African clawed frog).